The sequence spans 438 residues: Ubiquitin carboxyl-terminal hydrolase 27 (438 aa).

The USP domain maps to 78 to 421; that stretch reads RGLINLGNTC…EGYLLFYHKQ (344 aa). Catalysis depends on cysteine 87, which acts as the Nucleophile. The Proton acceptor role is filled by histidine 380.

This sequence belongs to the peptidase C19 family. Interacts with phosphorylated BCL2L11 isoform BIMEL; this interaction leads to BCL2L11 deubiquitination and stabilization.

It is found in the cytoplasm. The protein resides in the cytosol. Its subcellular location is the nucleus. The catalysed reaction is Thiol-dependent hydrolysis of ester, thioester, amide, peptide and isopeptide bonds formed by the C-terminal Gly of ubiquitin (a 76-residue protein attached to proteins as an intracellular targeting signal).. Functionally, deubiquitinase involved in innate antiviral immunity by mediating deubiquitination of CGAS and RIGI. Negatively regulates RIGI by mediating 'Lys-63'-linked deubiquitination of RIGI, inhibiting type I interferon signaling. Also regulates 'Lys-63'-linked ubiquitination level of MDA5/IFIH1. Acts as a positive regulator of the cGAS-STING pathway by catalyzing 'Lys-48'-linked deubiquitination of CGAS, thereby promoting its stabilization. Can reduce the levels of BCL2L11/BIM ubiquitination and stabilize BCL2L11 in response to the RAF-MAPK-degradation signal. By acting on BCL2L11 levels, may counteract the anti-apoptotic effects of MAPK activity. The sequence is that of Ubiquitin carboxyl-terminal hydrolase 27 from Homo sapiens (Human).